The primary structure comprises 210 residues: UMP-CMP kinase 3 (210 aa).

Residue 34–39 (GSGKGT) coordinates ATP. Residues 54–83 (SAGDLLRAEIKSGSENGTMIENMIKEGKIV) form an NMP region. A ribonucleoside 5'-phosphate is bound by residues R60, 81–83 (KIV), and 108–111 (GFPR). N115 is a CMP binding site. Residues 146–154 (GRNQGRVDD) are LID. Residue R147 coordinates ATP. The a ribonucleoside 5'-phosphate site is built by R151 and R162. Residue K190 coordinates ATP.

This sequence belongs to the adenylate kinase family. UMP-CMP kinase subfamily. Monomer. Mg(2+) is required as a cofactor.

The protein localises to the cytoplasm. The protein resides in the nucleus. The catalysed reaction is UMP + ATP = UDP + ADP. It carries out the reaction CMP + ATP = CDP + ADP. The enzyme catalyses dCMP + ATP = dCDP + ADP. Its function is as follows. Catalyzes the phosphorylation of pyrimidine nucleoside monophosphates at the expense of ATP. Plays an important role in de novo pyrimidine nucleotide biosynthesis. Has preference for UMP and CMP as phosphate acceptors. The polypeptide is UMP-CMP kinase 3 (URA6) (Oryza sativa subsp. japonica (Rice)).